We begin with the raw amino-acid sequence, 957 residues long: MLTEASLSIWGWGSLGIVLFLITFGPFVIFYLAFYILCFVGGGLVVTLLYGKTNSEKYLEQCEHSFLPPTSSGVPKCLEEMKREARTIKIDRRLTGANIIDEPLQQVIQFSLRDYVQYWYYTLSDDESFLLEIRQTLQNALIQFATRSKEIDWQPYFTTRIVDDFGTHLRVFRKAQQRVTEKDDQVKGTAEDLVETFFEVEVEMEKDVCRDLVCTSPKDEEGFLRDLCEVLLYLLLPPGDFQSKIMRYFVREILARGILLPLINQLSDPDYINQYVIWMIRDSNCNYEAFMNIIKLSDNIGELEAVRDKAAEELQYLRSLDTAGDDINTIKNQINSLLFVKKVCDSRIQRLQSGKEINTVKLAANFGKLCTVPLDSILVDNVALQFFMDYMQQTGGQAHLFFWMTVEGYRVTAQQQLEVLSGRQRDGKQQTNQTKGLLRAAAVGIYEQYLSEKASPRVTVDDYLVAKLADTLNHEDPTPEIFDDIQRKVYELMLRDERFYPSFRQNALYVRMLAELDMLKDPSFRGSDDGDGESFNGSPTGSINLSLDDLSSVTSDDSVQLHAYISDTGVCNDHGKTYALYAITVHRRNLNTEEMWKTYRRYSDFHDFHMRITEQFENLSSILKLPGKKTFNNMDRDFLEKRKKDLNAYLQLLLTPEMMKASPALAHCVYDFLENKAYSKGKGDFARKMDTFVNPLRNSMRNVSNAVKSLPDSLAEGVTKMSDNVGRMSERLGQDIKQSFFKVPPLITKTDSDPEHCRVSAQLDDNVDDNIPLRVMLLLMDEVFDLKERNQWLRRNIKNLLQQLIRATYGDTINRKIVDHVDWMTSPEQVADSVKRFRDAFWPNGILAETVPCRDKAIRMRTRIAGKTKLFAIMPDELKHIIGAETTRKGILRVFEMFQHNQLNRRMVYVFLEGFLETLFPQYKFRELFNKLHSRSKQMQKYKQKLQSTQAPSLQKR.

Positions 97-284 constitute a PXA domain; sequence ANIIDEPLQQ…YVIWMIRDSN (188 aa). Positions 373-511 constitute an RGS domain; it reads PLDSILVDNV…SFRQNALYVR (139 aa). The PX domain maps to 559 to 680; the sequence is VQLHAYISDT…DFLENKAYSK (122 aa). 4 residues coordinate a 1,2-diacyl-sn-glycero-3-phospho-(1D-myo-inositol-3-phosphate): Arg601, Ser603, Lys628, and Arg642.

Belongs to the sorting nexin family.

The protein localises to the early endosome membrane. Its function is as follows. May be involved in several stages of intracellular trafficking. Acts as a GAP for Galphas. May play a role in endosome homeostasis. This is Sorting nexin-13 (Snx13) from Mus musculus (Mouse).